Consider the following 481-residue polypeptide: uncharacterized protein (481 aa).

It to M.tuberculosis RV2411c.

This is an uncharacterized protein from Synechocystis sp. (strain ATCC 27184 / PCC 6803 / Kazusa).